The sequence spans 260 residues: MSRKKTPKSKGGSEPATSTLPAAAAATNGPRLAHPRTVRPGPEAPPNGPPQSIRPSLGSTGDFYDVAFKVMLVGDSGVGKTCLLVRFKDGAFLAGTFISTVGIDFRNKVLDVDGMKVKLQIWDTAGQERFRSVTHAYYRDAHALLLLYDITNKDSFDNIQAWLTEIQEYAQQDVVLMLLGNKVDSTQDRVVKREDGEKLAKEYGLPFMETSARTGLNVDLAFTAIAKELKQRSAKAPSEPRFRLHDYVKREGRGVSCCRL.

The tract at residues 1 to 56 (MSRKKTPKSKGGSEPATSTLPAAAAATNGPRLAHPRTVRPGPEAPPNGPPQSIRPS) is disordered. Positions 76, 77, 78, 79, 80, 81, 82, 99, and 100 each coordinate GTP. Residue threonine 81 coordinates Mg(2+). Short sequence motifs (switch) lie at residues 90-105 (GAFLAGTFISTVGIDF) and 123-140 (DTAGQERFRSVTHAYYRD). Residues threonine 100 and aspartate 123 each coordinate Mg(2+). GTP-binding residues include glycine 126, asparagine 181, lysine 182, aspartate 184, alanine 212, and arginine 213. 2 S-geranylgeranyl cysteine lipidation sites follow: cysteine 257 and cysteine 258.

The protein belongs to the small GTPase superfamily. Rab family. As to quaternary structure, interacts with ADRA2B. Interacts with RIMS1. Mg(2+) serves as cofactor. Detected in zymogenic cells in the stomach.

The protein localises to the cytoplasmic vesicle. The protein resides in the secretory vesicle membrane. Its subcellular location is the golgi apparatus membrane. It carries out the reaction GTP + H2O = GDP + phosphate + H(+). With respect to regulation, regulated by guanine nucleotide exchange factors (GEFs) which promote the exchange of bound GDP for free GTP. Regulated by GTPase activating proteins (GAPs) which increase the GTP hydrolysis activity. Inhibited by GDP dissociation inhibitors (GDIs). In terms of biological role, the small GTPases Rab are key regulators of intracellular membrane trafficking, from the formation of transport vesicles to their fusion with membranes. Rabs cycle between an inactive GDP-bound form and an active GTP-bound form that is able to recruit to membranes different set of downstream effectors directly responsible for vesicle formation, movement, tethering and fusion. RAB26 mediates transport of ADRA2A and ADRA2B from the Golgi to the cell membrane. Plays a role in the maturation of zymogenic granules and in pepsinogen secretion in the stomach. Plays a role in the secretion of amylase from acinar granules in the parotid gland. The polypeptide is Ras-related protein Rab-26 (Mus musculus (Mouse)).